A 1134-amino-acid chain; its full sequence is Phospholipid-transporting ATPase IH (1134 aa).

The Cytoplasmic segment spans residues 1 to 61 (MDCSLVRTLV…SSKYTFWNFI (61 aa)). Residues 62-82 (PKNLFEQFRRVANFYFLIIFL) traverse the membrane as a helical segment. At 83–88 (VQLIID) the chain is on the extracellular side. A helical transmembrane segment spans residues 89–110 (TPTSPVTSGLPLFFVITVTAIK). Residues 111-296 (QGYEDWLRHK…SAVEKSMNAF (186 aa)) lie on the Cytoplasmic side of the membrane. A helical transmembrane segment spans residues 297–318 (LIVYLCILISKALINTVLKYMW). The Extracellular segment spans residues 319–349 (QSEPFRDEPWYNQKTESERQRNLFLKAFTDF). Residues 350 to 372 (LAFMVLFNYIIPVSMYVTVEMQK) traverse the membrane as a helical segment. At 373-881 (FLGSYFITWD…GHFYYIRISE (509 aa)) the chain is on the cytoplasmic side. The 4-aspartylphosphate intermediate role is filled by aspartate 414. ATP is bound by residues aspartate 414, lysine 415, threonine 416, glutamate 511, phenylalanine 553, lysine 576, arginine 607, threonine 687, glycine 688, and aspartate 689. Residue aspartate 414 coordinates Mg(2+). A Mg(2+)-binding site is contributed by threonine 416. Serine 738 carries the phosphoserine modification. Residues arginine 798 and lysine 804 each coordinate ATP. Aspartate 825 contributes to the Mg(2+) binding site. Positions 828 and 829 each coordinate ATP. Mg(2+) is bound at residue aspartate 829. Residues 882–902 (LVQYFFYKNVCFIFPQFLYQF) traverse the membrane as a helical segment. Over 903–914 (FCGFSQQTLYDT) the chain is Extracellular. A helical membrane pass occupies residues 915–934 (AYLTLYNISFTSLPILLYSL). Over 935 to 964 (MEQHVGIDVLKRDPTLYRDVAKNALLRWRV) the chain is Cytoplasmic. The helical transmembrane segment at 965–986 (FIYWTLLGLFDALVFFFGAYFV) threads the bilayer. Residues 987–1000 (FENTTVTSNGQIFG) lie on the Extracellular side of the membrane. The chain crosses the membrane as a helical span at residues 1001 to 1023 (NWTFGTLVFTVMVFTVTLKLALD). Residues 1024 to 1029 (THYWTW) lie on the Cytoplasmic side of the membrane. Residues 1030 to 1050 (INHFVIWGSLLFYVVFSLLWG) form a helical membrane-spanning segment. The Extracellular portion of the chain corresponds to 1051–1068 (GVIWPFLNYQRMYYVFIQ). The chain crosses the membrane as a helical span at residues 1069 to 1093 (MLSSGPAWLAIVLLVTISLLPDVLK). The Cytoplasmic portion of the chain corresponds to 1094 to 1134 (KVLCRQLWPTATERVQTKSQCLSVEQSTIFMLSQTSSSLSF).

This sequence belongs to the cation transport ATPase (P-type) (TC 3.A.3) family. Type IV subfamily. In terms of assembly, component of a P4-ATPase flippase complex which consists of a catalytic alpha subunit ATP11A and an accessory beta subunit TMEM30A. Requires Mg(2+) as cofactor. In terms of processing, proteolytically cleaved by CASP3. Widely expressed. Expressed in myoblasts.

The protein localises to the cell membrane. It localises to the early endosome. Its subcellular location is the recycling endosome. The protein resides in the endoplasmic reticulum membrane. The enzyme catalyses ATP + H2O + phospholipidSide 1 = ADP + phosphate + phospholipidSide 2.. It catalyses the reaction a 1,2-diacyl-sn-glycero-3-phospho-L-serine(out) + ATP + H2O = a 1,2-diacyl-sn-glycero-3-phospho-L-serine(in) + ADP + phosphate + H(+). The catalysed reaction is a 1,2-diacyl-sn-glycero-3-phosphoethanolamine(out) + ATP + H2O = a 1,2-diacyl-sn-glycero-3-phosphoethanolamine(in) + ADP + phosphate + H(+). The flippase activity is inactivated by caspase-mediated cleavage in apoptotic cells, allowing for PS exposure on the cell surface and engulfment of apoptotic cells by macrophages. The ATPase activity is up-regulated by aminophospholipids PS and PE and down-regulated by increasing intracellular Ca2+ levels. Its function is as follows. Catalytic component of a P4-ATPase flippase complex which catalyzes the hydrolysis of ATP coupled to the transport of aminophospholipids, phosphatidylserines (PS) and phosphatidylethanolamines (PE), from the outer to the inner leaflet of the plasma membrane. Does not show flippase activity toward phosphatidylcholine (PC). Contributes to the maintenance of membrane lipid asymmetry with a specific role in morphogenesis of muscle cells. In myoblasts, mediates PS enrichment at the inner leaflet of plasma membrane, triggering PIEZO1-dependent Ca2+ influx and Rho GTPases signal transduction, subsequently leading to the assembly of cortical actomyosin fibers and myotube formation. May be involved in the uptake of farnesyltransferase inhibitor drugs, such as lonafarnib. This chain is Phospholipid-transporting ATPase IH (ATP11A), found in Homo sapiens (Human).